The following is a 157-amino-acid chain: Glutamyl-tRNA(Gln) amidotransferase subunit C, mitochondrial (157 aa).

The protein belongs to the GatC family. In terms of assembly, subunit of the heterotrimeric GatCAB amidotransferase (AdT) complex, composed of A, B and C subunits.

It is found in the mitochondrion. It catalyses the reaction L-glutamyl-tRNA(Gln) + L-glutamine + ATP + H2O = L-glutaminyl-tRNA(Gln) + L-glutamate + ADP + phosphate + H(+). In terms of biological role, allows the formation of correctly charged Gln-tRNA(Gln) through the transamidation of misacylated Glu-tRNA(Gln) in the mitochondria. The reaction takes place in the presence of glutamine and ATP through an activated gamma-phospho-Glu-tRNA(Gln). The chain is Glutamyl-tRNA(Gln) amidotransferase subunit C, mitochondrial from Drosophila virilis (Fruit fly).